A 105-amino-acid polypeptide reads, in one-letter code: Nucleoid-associated protein SE_2306 (105 aa).

Residues 1–40 are disordered; the sequence is MRGGGNMQQMMKQMQKMQKKMAQEQEKLKEERVAGTAGGG. Over residues 7-16 the composition is skewed to low complexity; the sequence is MQQMMKQMQK. The segment covering 21 to 33 has biased composition (basic and acidic residues); sequence MAQEQEKLKEERV.

The protein belongs to the YbaB/EbfC family. In terms of assembly, homodimer.

Its subcellular location is the cytoplasm. The protein resides in the nucleoid. In terms of biological role, binds to DNA and alters its conformation. May be involved in regulation of gene expression, nucleoid organization and DNA protection. This Staphylococcus epidermidis (strain ATCC 12228 / FDA PCI 1200) protein is Nucleoid-associated protein SE_2306.